A 187-amino-acid chain; its full sequence is Elongation factor P (187 aa).

The protein belongs to the elongation factor P family.

The protein localises to the cytoplasm. It functions in the pathway protein biosynthesis; polypeptide chain elongation. Involved in peptide bond synthesis. Stimulates efficient translation and peptide-bond synthesis on native or reconstituted 70S ribosomes in vitro. Probably functions indirectly by altering the affinity of the ribosome for aminoacyl-tRNA, thus increasing their reactivity as acceptors for peptidyl transferase. This is Elongation factor P (efp) from Helicobacter pylori (strain J99 / ATCC 700824) (Campylobacter pylori J99).